The chain runs to 89 residues: UPF0213 protein LMOf2365_0181 (89 aa).

The 76-residue stretch at 5 to 80 folds into the GIY-YIG domain; that stretch reads SEHFFYVLKC…KKLSRKNKDA (76 aa).

This sequence belongs to the UPF0213 family.

This chain is UPF0213 protein LMOf2365_0181, found in Listeria monocytogenes serotype 4b (strain F2365).